The sequence spans 379 residues: Inactive 2'-5'-oligoadenylate synthase 1B (379 aa).

Topologically, residues 1–355 (MEQELRSIPA…VPTEVDIPSQ (355 aa)) are cytoplasmic. A helical; Anchor for type IV membrane protein membrane pass occupies residues 356-374 (NYFFHIICLIFWLLLRLIF). At 375–379 (GKHSV) the chain is on the extracellular side.

The protein belongs to the 2-5A synthase family. In terms of assembly, interacts with OSBPL1A and ABCF3. Highly expressed in the brain, liver, spleen and heart.

The protein resides in the endoplasmic reticulum membrane. Does not have 2'-5'-OAS activity, but can bind double-stranded RNA. Displays antiviral activity against viruses via an alternative antiviral pathway independent of RNase L. The sequence is that of Inactive 2'-5'-oligoadenylate synthase 1B (Oas1b) from Rattus norvegicus (Rat).